The following is a 203-amino-acid chain: Protein GrpE (203 aa).

The disordered stretch occupies residues 1–38 (MTQDQTAEQMPAAESADQSADQGPAAESAAPPAVDSER).

Belongs to the GrpE family. In terms of assembly, homodimer.

It is found in the cytoplasm. Participates actively in the response to hyperosmotic and heat shock by preventing the aggregation of stress-denatured proteins, in association with DnaK and GrpE. It is the nucleotide exchange factor for DnaK and may function as a thermosensor. Unfolded proteins bind initially to DnaJ; upon interaction with the DnaJ-bound protein, DnaK hydrolyzes its bound ATP, resulting in the formation of a stable complex. GrpE releases ADP from DnaK; ATP binding to DnaK triggers the release of the substrate protein, thus completing the reaction cycle. Several rounds of ATP-dependent interactions between DnaJ, DnaK and GrpE are required for fully efficient folding. This chain is Protein GrpE, found in Paramagnetospirillum magneticum (strain ATCC 700264 / AMB-1) (Magnetospirillum magneticum).